A 31-amino-acid chain; its full sequence is Putative translational regulatory protein ArgL (31 aa).

Its function is as follows. May serve a regulatory role in expression of downstream gene argF; in an argL-argF-lacZ fusion mutation of the start codon to a stop codon in argL increases expression of beta-galactosidase. The polypeptide is Putative translational regulatory protein ArgL (Escherichia coli (strain K12)).